The primary structure comprises 340 residues: L-threonine 3-dehydrogenase (340 aa).

Cys-38 serves as a coordination point for Zn(2+). Residues Thr-40 and His-43 each act as charge relay system in the active site. Residues His-63, Glu-64, Cys-93, Cys-96, Cys-99, and Cys-107 each contribute to the Zn(2+) site. NAD(+) is bound by residues Ile-175, Asp-195, Arg-200, 261 to 263 (LGI), and 285 to 286 (IY).

Belongs to the zinc-containing alcohol dehydrogenase family. Homotetramer. Requires Zn(2+) as cofactor.

It is found in the cytoplasm. The catalysed reaction is L-threonine + NAD(+) = (2S)-2-amino-3-oxobutanoate + NADH + H(+). The protein operates within amino-acid degradation; L-threonine degradation via oxydo-reductase pathway; glycine from L-threonine: step 1/2. In terms of biological role, catalyzes the NAD(+)-dependent oxidation of L-threonine to 2-amino-3-ketobutyrate. This Xanthomonas oryzae pv. oryzae (strain MAFF 311018) protein is L-threonine 3-dehydrogenase.